A 33-amino-acid chain; its full sequence is Protamine-2C (33 aa).

The tract at residues 1-33 (MPRRRRSSRRPVRRRRRPRVSRRRRRRGGRRRR) is disordered.

Testis.

The protein resides in the nucleus. The protein localises to the chromosome. In terms of biological role, protamines substitute for histones in the chromatin of sperm during the haploid phase of spermatogenesis. They compact sperm DNA into a highly condensed, stable and inactive complex. The protein is Protamine-2C of Oncorhynchus mykiss (Rainbow trout).